Here is a 301-residue protein sequence, read N- to C-terminus: uncharacterized protein (301 aa).

The protein belongs to the asfivirus E301R family. In terms of assembly, interacts with host IRF3.

Its function is as follows. Plays a role in the inhibition of host innate immune system by acting as a negatively regulator of type I interferon production. Mechanistically, interacts with and prevents host IRF3 nuclear localization to inhibit its transcriptional activity. This is an uncharacterized protein from African swine fever virus (strain Badajoz 1971 Vero-adapted) (Ba71V).